Here is an 89-residue protein sequence, read N- to C-terminus: Large ribosomal subunit protein bL27 (89 aa).

The disordered stretch occupies residues 1–22; the sequence is MAQKKAGGSSRNGRDSAGRRLG.

Belongs to the bacterial ribosomal protein bL27 family.

The protein is Large ribosomal subunit protein bL27 of Gluconacetobacter diazotrophicus (strain ATCC 49037 / DSM 5601 / CCUG 37298 / CIP 103539 / LMG 7603 / PAl5).